Reading from the N-terminus, the 434-residue chain is Sulfide-quinone reductase (434 aa).

Residues 8–12 (GAGTG), 34–35 (SA), and 77–78 (SA) each bind FAD. Catalysis depends on Cys-160, which acts as the Cysteine persulfide intermediate. Positions 302 and 322 each coordinate FAD. The active-site Cysteine persulfide intermediate is the Cys-356. Lys-391 lines the FAD pocket.

This sequence belongs to the SQRD family. As to quaternary structure, homodimer. Requires FAD as cofactor.

It is found in the membrane. It carries out the reaction n a quinone + n hydrogen sulfide + n H(+) = polysulfur(n-2) + n a quinol. Its function is as follows. Catalyzes the oxidation of hydrogen sulfide, with the help of a quinone. Consecutive reaction cycles lead to the accumulation of a polysulfide product on the active site Cys residues; these products are released when they exceed a critical length, typically as cyclooctasulfur. In Acidithiobacillus ferrooxidans (strain ATCC 23270 / DSM 14882 / CIP 104768 / NCIMB 8455) (Ferrobacillus ferrooxidans (strain ATCC 23270)), this protein is Sulfide-quinone reductase.